The primary structure comprises 401 residues: Canavanine gamma-lyase (401 aa).

Lys214 bears the N6-(pyridoxal phosphate)lysine mark.

The protein belongs to the trans-sulfuration enzymes family. Pyridoxal 5'-phosphate serves as cofactor.

The catalysed reaction is L-canavanine + H2O = N-hydroxyguanidine + L-homoserine. Lyase involved in the degradation of canavanine, the delta-oxa-analog of arginine, allowing growth on canavanine as sole nitrogen and carbon source. Catalyzes the elimination of hydroxyguanidine from canavanine with a subsequent water addition to yield homoserine. The sequence is that of Canavanine gamma-lyase from Rhizobium leguminosarum bv. trifolii (strain WSM2304).